Consider the following 226-residue polypeptide: Putative ABC transporter ATP-binding protein BQ02700 (226 aa).

The 222-residue stretch at 4-225 (IKFDKVTQVF…VAIKEYIRRM (222 aa)) folds into the ABC transporter domain. 35-42 (GANGSGKS) provides a ligand contact to ATP.

Belongs to the ABC transporter superfamily.

It localises to the cell inner membrane. Functionally, probably part of an ABC transporter complex. Responsible for energy coupling to the transport system. This Bartonella quintana (strain Toulouse) (Rochalimaea quintana) protein is Putative ABC transporter ATP-binding protein BQ02700.